We begin with the raw amino-acid sequence, 113 residues long: Ribulose bisphosphate carboxylase small subunit (113 aa).

It belongs to the RuBisCO small chain family. Heterohexadecamer of 8 large and 8 small subunits. RuBisCO interacts with the C-terminus of CcmM, and can be found in complexes that also include carbonic anhydrase (ccaA).

It is found in the carboxysome. Functionally, ruBisCO catalyzes two reactions: the carboxylation of D-ribulose 1,5-bisphosphate, the primary event in carbon dioxide fixation, as well as the oxidative fragmentation of the pentose substrate in the photorespiration process. Both reactions occur simultaneously and in competition at the same active site. Although the small subunit is not catalytic it is essential for maximal activity. The polypeptide is Ribulose bisphosphate carboxylase small subunit (Synechocystis sp. (strain ATCC 27184 / PCC 6803 / Kazusa)).